We begin with the raw amino-acid sequence, 494 residues long: Alpha-amylase-related protein (494 aa).

Residues 1–20 (MFKFALALTLCLAGASLSLA) form the signal peptide. Q21 carries the post-translational modification Pyrrolidone carboxylic acid. A disulfide bond links C48 and C104. Positions 118, 169, and 178 each coordinate Ca(2+). Cysteines 157 and 171 form a disulfide. Chloride is bound at residue R206. The active-site Nucleophile is D208. Position 212 (H212) interacts with Ca(2+). E245 (proton donor) is an active-site residue. Chloride contacts are provided by N308 and R343. Disulfide bonds link C376–C382, C418–C441, and C448–C460.

This sequence belongs to the glycosyl hydrolase 13 family. Monomer. Requires Ca(2+) as cofactor. It depends on chloride as a cofactor.

Its subcellular location is the secreted. It carries out the reaction Endohydrolysis of (1-&gt;4)-alpha-D-glucosidic linkages in polysaccharides containing three or more (1-&gt;4)-alpha-linked D-glucose units.. The chain is Alpha-amylase-related protein (Amyrel) from Drosophila punjabiensis (Fruit fly).